The chain runs to 345 residues: Platelet-derived growth factor C (345 aa).

A signal peptide spans 1-22 (MLLLGLLLLTSALAGQRTGTRA). A compositionally biased stretch (polar residues) spans 24–33 (SNLSSKLQLS). A disordered region spans residues 24–45 (SNLSSKLQLSSDKEQNGVQDPR). The N-linked (GlcNAc...) asparagine glycan is linked to Asn-25. A compositionally biased stretch (basic and acidic residues) spans 34–45 (SDKEQNGVQDPR). Positions 46–163 (HERVVTISGN…PGFCIHYSII (118 aa)) constitute a CUB domain. Asn-55 carries N-linked (GlcNAc...) asparagine glycosylation. 4 cysteine pairs are disulfide-bonded: Cys-104-Cys-124, Cys-250-Cys-294, Cys-280-Cys-335, and Cys-287-Cys-337.

This sequence belongs to the PDGF/VEGF growth factor family. Homodimer; disulfide-linked. Interacts with PDGFRA homodimers, and with heterodimers formed by PDGFRA and PDGFRB. Interacts (via CUB domain) with PLAT (via kringle domain). Proteolytic removal of the N-terminal CUB domain releasing the core domain is necessary for unmasking the receptor-binding epitopes of the core domain. Cleavage after basic residues in the hinge region (region connecting the CUB and growth factor domains) gives rise to the receptor-binding form. Cleaved by PLAT and PLG. In terms of processing, sumoylated with SUMO1. Post-translationally, N-glycosylated. As to expression, highly expressed in the kidney and adrenal gland. In the kidney, it is expressed in arteriolar smooth muscle cells and in epithelial cells of individual segments (at protein level).

It localises to the cytoplasm. It is found in the cytosol. The protein resides in the secreted. Its subcellular location is the nucleus. The protein localises to the cytoplasmic granule. It localises to the cell membrane. Its function is as follows. Growth factor that plays an essential role in the regulation of embryonic development, cell proliferation, cell migration, survival and chemotaxis. Potent mitogen and chemoattractant for cells of mesenchymal origin. Required for normal skeleton formation during embryonic development, especially for normal development of the craniofacial skeleton and for normal development of the palate. Required for normal skin morphogenesis during embryonic development. Plays an important role in wound healing, where it appears to be involved in three stages: inflammation, proliferation and remodeling. Plays an important role in angiogenesis and blood vessel development. Involved in fibrotic processes, in which transformation of interstitial fibroblasts into myofibroblasts plus collagen deposition occurs. The CUB domain has mitogenic activity in coronary artery smooth muscle cells, suggesting a role beyond the maintenance of the latency of the PDGF domain. In the nucleus, PDGFC seems to have additional function. This Rattus norvegicus (Rat) protein is Platelet-derived growth factor C (Pdgfc).